The chain runs to 319 residues: N-acetyllactosaminide alpha-1,3-galactosyltransferase-like 1 (319 aa).

Over 1-6 the chain is Cytoplasmic; sequence MQYKKE. A helical; Signal-anchor for type II membrane protein transmembrane segment spans residues 7-26; that stretch reads ALLLMLFAVLLALTQRFSYS. The Lumenal portion of the chain corresponds to 27 to 319; that stretch reads RTKDHLQKMY…IKHIKIAWKP (293 aa). N-linked (GlcNAc...) asparagine glycosylation is found at asparagine 89 and asparagine 101. Substrate-binding positions include 97-102, 188-190, and 210-213; these read FATGNF, AVN, and HAWW. Catalysis depends on glutamate 278, which acts as the Nucleophile.

It belongs to the glycosyltransferase 6 family. It depends on Mn(2+) as a cofactor.

The protein resides in the golgi apparatus. It is found in the golgi stack membrane. The enzyme catalyses a beta-D-galactosyl-(1-&gt;4)-N-acetyl-beta-D-glucosaminyl derivative + UDP-alpha-D-galactose = an alpha-D-galactosyl-(1-&gt;3)-beta-D-galactosyl-(1-&gt;4)-N-acetyl-beta-D-glucosaminyl derivative + UDP + H(+). It participates in protein modification; protein glycosylation. Its function is as follows. Synthesizes the galactose-alpha(1,3)-galactose group by catalyzing the transfer of a galactose residue, with an alpha-1,3 linkage, on terminal lactosaminide (Gal-beta-1,4-GlcNAc-R) disaccharide borne by a glycoprotein or a glycolipid. In Mus musculus (Mouse), this protein is N-acetyllactosaminide alpha-1,3-galactosyltransferase-like 1 (Ggta1l1).